Reading from the N-terminus, the 792-residue chain is Phenylalanine--tRNA ligase beta subunit (792 aa).

In terms of domain architecture, tRNA-binding spans G39–A147. The B5 domain maps to P400 to T475. Mg(2+)-binding residues include D453, D459, E462, and E463. The FDX-ACB domain occupies S698–R791.

This sequence belongs to the phenylalanyl-tRNA synthetase beta subunit family. Type 1 subfamily. In terms of assembly, tetramer of two alpha and two beta subunits. The cofactor is Mg(2+).

The protein localises to the cytoplasm. It carries out the reaction tRNA(Phe) + L-phenylalanine + ATP = L-phenylalanyl-tRNA(Phe) + AMP + diphosphate + H(+). The chain is Phenylalanine--tRNA ligase beta subunit (pheT) from Xylella fastidiosa (strain 9a5c).